The sequence spans 158 residues: Transcription elongation factor GreA (158 aa).

This sequence belongs to the GreA/GreB family.

Its function is as follows. Necessary for efficient RNA polymerase transcription elongation past template-encoded arresting sites. The arresting sites in DNA have the property of trapping a certain fraction of elongating RNA polymerases that pass through, resulting in locked ternary complexes. Cleavage of the nascent transcript by cleavage factors such as GreA or GreB allows the resumption of elongation from the new 3'terminus. GreA releases sequences of 2 to 3 nucleotides. In Macrococcus caseolyticus (strain JCSC5402) (Macrococcoides caseolyticum), this protein is Transcription elongation factor GreA.